The sequence spans 331 residues: MSELPAFWLRRPPDWRAHALRPLAALYGGVMRLRRYGYRKGWIRRGRLPVPVVVVGNIFVGGTGKTPLVAWIADTLAAMGRRPGIVSRGYGGRSREWPRRVAADSDPAEVGDEPLLLARGTGCPVAVGPDRVAAAQLLLAAGCDVVVSDDGLQHYRLPRALELVVCDGHRGLGNGLCLPAGPLREPADRLADVDMVISNGRAPALTPWWFELVPGPLRPLAADAAPEGGPEPGTTVHAVAGIGHPARFFATLEGLGYRVIPHPFPDHHPYRAGELRFGDDRPVIMTEKDAVKCAGLAPARSWFLPVEARPEPATRERLEASLARLHSLTNR.

Position 59–66 (59–66) interacts with ATP; it reads FVGGTGKT.

This sequence belongs to the LpxK family.

The enzyme catalyses a lipid A disaccharide + ATP = a lipid IVA + ADP + H(+). The protein operates within glycolipid biosynthesis; lipid IV(A) biosynthesis; lipid IV(A) from (3R)-3-hydroxytetradecanoyl-[acyl-carrier-protein] and UDP-N-acetyl-alpha-D-glucosamine: step 6/6. In terms of biological role, transfers the gamma-phosphate of ATP to the 4'-position of a tetraacyldisaccharide 1-phosphate intermediate (termed DS-1-P) to form tetraacyldisaccharide 1,4'-bis-phosphate (lipid IVA). This Alkalilimnicola ehrlichii (strain ATCC BAA-1101 / DSM 17681 / MLHE-1) protein is Tetraacyldisaccharide 4'-kinase.